The primary structure comprises 212 residues: Cyclin-dependent kinase inhibitor 3 (212 aa).

The tract at residues 1–24 is disordered; the sequence is MKPPISIQASEFDSSDEEPADDEQ. Residues 1-34 form an interaction with CDK2 region; sequence MKPPISIQASEFDSSDEEPADDEQTPIQISWLPL. A compositionally biased stretch (acidic residues) spans 13 to 24; it reads DSSDEEPADDEQ. A Tyrosine-protein phosphatase domain is found at 32–201; it reads LPLSRVNCSQ…FRDKLAAYLS (170 aa). Cysteine 140 (phosphocysteine intermediate) is an active-site residue.

Belongs to the protein-tyrosine phosphatase family. In terms of assembly, interacts with cyclin-dependent kinases such as CDK1, CDK2 and CDK3. Does not interact with CDK4. Interacts (via C-terminus) with phosphorylated CDK2 (via C-terminal helix). Interacts with MS4A3 (via C-terminus); the interaction enhances CDKN3 enzymatic activity.

The protein localises to the cytoplasm. The protein resides in the perinuclear region. The enzyme catalyses O-phospho-L-tyrosyl-[protein] + H2O = L-tyrosyl-[protein] + phosphate. It catalyses the reaction O-phospho-L-seryl-[protein] + H2O = L-seryl-[protein] + phosphate. The catalysed reaction is O-phospho-L-threonyl-[protein] + H2O = L-threonyl-[protein] + phosphate. In terms of biological role, may play a role in cell cycle regulation. Dual specificity phosphatase active toward substrates containing either phosphotyrosine or phosphoserine residues. Dephosphorylates CDK2 at 'Thr-160' in a cyclin-dependent manner. The protein is Cyclin-dependent kinase inhibitor 3 of Rattus norvegicus (Rat).